Here is a 225-residue protein sequence, read N- to C-terminus: MNHLWLFIVTVSCIYLVYGQGEESVPCKVKFMGTACPLGRLVCEEDGDCLGVNQVCCYDGCGTTCHNKTTTLIPSTTQPQIQPIIPSTQPQIQPIIPSTQPQIQPFIPSTQPQIQRIIPSPELLCPVVTVRYAFCRFSTYTPCHTSNDCAVPGMKCCPDVCGKRCKFPINSTDHQQFQQTPLKPTVPLPQYQQTPLQPTVPSSQPPLQPTVPSPQSYNYKGACST.

Positions 1 to 19 are cleaved as a signal peptide; the sequence is MNHLWLFIVTVSCIYLVYG. 4 cysteine pairs are disulfide-bonded: C27–C57, C36–C61, C43–C56, and C49–C65. Residues 27 to 68 form the WAP 1; atypical domain; the sequence is CKVKFMGTACPLGRLVCEEDGDCLGVNQVCCYDGCGTTCHNK. An N-linked (GlcNAc...) asparagine glycan is attached at N67. One can recognise a WAP 2 domain in the interval 117 to 169; it reads IIPSPELLCPVVTVRYAFCRFSTYTPCHTSNDCAVPGMKCCPDVCGKRCKFPI. Intrachain disulfides connect C125/C157, C135/C161, C143/C156, and C149/C165. Residue N170 is glycosylated (N-linked (GlcNAc...) asparagine). The segment at 176–225 is disordered; the sequence is QFQQTPLKPTVPLPQYQQTPLQPTVPSSQPPLQPTVPSPQSYNYKGACST. The segment covering 188 to 201 has biased composition (low complexity); the sequence is LPQYQQTPLQPTVP. Over residues 203 to 212 the composition is skewed to pro residues; that stretch reads SQPPLQPTVP. Residues 213 to 225 are compositionally biased toward polar residues; it reads SPQSYNYKGACST.

Component of the acid-soluble organic matrix of calcified layers of the shell (at protein level).

Its subcellular location is the secreted. This chain is Perlwapin-like protein, found in Lottia gigantea (Giant owl limpet).